The chain runs to 295 residues: 33 kDa chaperonin (295 aa).

2 cysteine pairs are disulfide-bonded: Cys-238/Cys-240 and Cys-271/Cys-274.

Belongs to the HSP33 family. Under oxidizing conditions two disulfide bonds are formed involving the reactive cysteines. Under reducing conditions zinc is bound to the reactive cysteines and the protein is inactive.

The protein resides in the cytoplasm. Redox regulated molecular chaperone. Protects both thermally unfolding and oxidatively damaged proteins from irreversible aggregation. Plays an important role in the bacterial defense system toward oxidative stress. This Clostridium botulinum (strain Eklund 17B / Type B) protein is 33 kDa chaperonin.